Consider the following 1328-residue polypeptide: Mitogen-activated protein kinase kinase kinase 19 (1328 aa).

Over residues 1-19 (MSSMPKPERHAESLLDICH) the composition is skewed to basic and acidic residues. Disordered regions lie at residues 1-28 (MSSMPKPERHAESLLDICHDTNSSPTDL), 44-74 (RSEEFDQDGDCSHSTLVNEEEDPSGGRQDWQ), 344-380 (VREEDIDCHGSKTRKPEEENSQYLSSRKNESSVAKNY), and 524-561 (QENDKHKMNSHRSKLDSKTKTSKKTPQNFVISTEGPIK). Residues 344–361 (VREEDIDCHGSKTRKPEE) show a composition bias toward basic and acidic residues. Polar residues predominate over residues 364-377 (SQYLSSRKNESSVA). Residues 524-542 (QENDKHKMNSHRSKLDSKT) are compositionally biased toward basic and acidic residues. The Protein kinase domain occupies 1061–1324 (WTKGEILGKG…ALQLLKHSFL (264 aa)). Residues 1067–1075 (LGKGAYGTV) and lysine 1089 contribute to the ATP site. Catalysis depends on aspartate 1186, which acts as the Proton acceptor.

It belongs to the protein kinase superfamily. STE Ser/Thr protein kinase family. STE20 subfamily.

The enzyme catalyses L-seryl-[protein] + ATP = O-phospho-L-seryl-[protein] + ADP + H(+). The catalysed reaction is L-threonyl-[protein] + ATP = O-phospho-L-threonyl-[protein] + ADP + H(+). The polypeptide is Mitogen-activated protein kinase kinase kinase 19 (MAP3K19) (Homo sapiens (Human)).